Here is a 322-residue protein sequence, read N- to C-terminus: Mitochondrial thiamine pyrophosphate carrier 1 (322 aa).

3 Solcar repeats span residues 12–111, 122–208, and 215–310; these read GSKT…VTLG, PAAA…LRLP, and PFGS…VLGI. 6 helical membrane passes run 18-38, 92-108, 128-148, 180-200, 221-241, and 285-302; these read MIAGATAGLIARFVIAPLDVV, LMYVSYSAIQFTTYRSV, FIAGASAGAVATTATYPLDLL, FFQGLGAGVGQIVPYMGIFFA, ASAGVIASVIAKTGIFPFDLI, and GLTVSLFKSAPASAVTMW.

It belongs to the mitochondrial carrier (TC 2.A.29) family.

Its subcellular location is the mitochondrion inner membrane. Its function is as follows. Mitochondrial transporter that mediates uptake of thiamine pyrophosphate (ThPP) into mitochondria. The polypeptide is Mitochondrial thiamine pyrophosphate carrier 1 (tpc1) (Botryotinia fuckeliana (strain B05.10) (Noble rot fungus)).